Consider the following 42-residue polypeptide: Cytochrome b559 subunit beta (42 aa).

The chain crosses the membrane as a helical span at residues 17 to 33 (WLAIHAIGIPAVFFIGS). His-21 is a heme binding site.

This sequence belongs to the PsbE/PsbF family. As to quaternary structure, heterodimer of an alpha subunit and a beta subunit. PSII is composed of 1 copy each of membrane proteins PsbA, PsbB, PsbC, PsbD, PsbE, PsbF, PsbH, PsbI, PsbJ, PsbK, PsbL, PsbM, PsbT, PsbX, PsbY, PsbZ, Psb30/Ycf12, at least 3 peripheral proteins of the oxygen-evolving complex and a large number of cofactors. It forms dimeric complexes. Heme b serves as cofactor.

Its subcellular location is the plastid. It is found in the cyanelle thylakoid membrane. In terms of biological role, this b-type cytochrome is tightly associated with the reaction center of photosystem II (PSII). PSII is a light-driven water:plastoquinone oxidoreductase that uses light energy to abstract electrons from H(2)O, generating O(2) and a proton gradient subsequently used for ATP formation. It consists of a core antenna complex that captures photons, and an electron transfer chain that converts photonic excitation into a charge separation. This Cyanophora paradoxa protein is Cytochrome b559 subunit beta.